Here is a 653-residue protein sequence, read N- to C-terminus: Amyloid beta A4 precursor protein-binding family B member 1-interacting protein (653 aa).

The interval 82–141 (NNKSTAPFPPADASNSYHFHPPPMPSIITEDLSLLPPPPEFDPHYPPPPPDPLTEPKTQE) is disordered. Positions 116–134 (LPPPPEFDPHYPPPPPDPL) are enriched in pro residues. The region spanning 165–253 (KKRIVKVHMI…IHFLEKNEKY (89 aa)) is the Ras-associating domain. The PH domain maps to 295–404 (VPELEAALYL…WVTGIRIAKY (110 aa)). The segment covering 462–481 (KHGEANKQEKKSSEVNKPET) has biased composition (basic and acidic residues). Positions 462–653 (KHGEANKQEK…ALQKKREPPT (192 aa)) are disordered. A compositionally biased stretch (pro residues) spans 585–604 (PAPPPPPPPPAPAANVPPLP). Over residues 605–614 (VKKHPPKPPK) the composition is skewed to basic residues.

The protein belongs to the MRL family.

The protein localises to the cell membrane. Its subcellular location is the cytoplasm. It is found in the cytoskeleton. Its function is as follows. Appears to function in the signal transduction from Ras activation to actin cytoskeletal remodeling. The polypeptide is Amyloid beta A4 precursor protein-binding family B member 1-interacting protein (apbb1ip) (Xenopus laevis (African clawed frog)).